A 50-amino-acid chain; its full sequence is C-C motif chemokine 5 (50 aa).

This sequence belongs to the intercrine beta (chemokine CC) family.

The protein localises to the secreted. Chemoattractant for blood monocytes, memory T-helper cells and eosinophils. Causes the release of histamine from basophils and activates eosinophils. May activate several chemokine receptors including CCR1, CCR3, CCR4 and CCR5. May also be an agonist of the G protein-coupled receptor GPR75. Together with GPR75, may play a role in neuron survival through activation of a downstream signaling pathway involving the PI3, Akt and MAP kinases. By activating GPR75 may also play a role in insulin secretion by islet cells. This chain is C-C motif chemokine 5 (CCL5), found in Sus scrofa (Pig).